We begin with the raw amino-acid sequence, 248 residues long: 3,4-dihydroxyphthalate decarboxylase (248 aa).

Glutamate 90 functions as the Proton donor/acceptor in the catalytic mechanism. The a divalent metal cation site is built by glutamate 90, histidine 109, histidine 111, and histidine 177.

Belongs to the aldolase class II family. It depends on a divalent metal cation as a cofactor.

It catalyses the reaction 3,4-dihydroxyphthalate + H(+) = 3,4-dihydroxybenzoate + CO2. Its pathway is xenobiotic degradation; phthalate degradation. Catalyzes the decarboxylation of 3,4-dihydroxyphthalate to protocatechuate (3,4-dihydroxybenzoate) during phthalate metabolism. This is 3,4-dihydroxyphthalate decarboxylase from Arthrobacter keyseri.